A 728-amino-acid chain; its full sequence is Methionine--tRNA ligase (728 aa).

The short motif at 13-23 (PYANGSIHLGH) is the 'HIGH' region element. Positions 144, 147, 157, and 160 each coordinate Zn(2+). Residues 348–352 (KMSKS) carry the 'KMSKS' region motif. Lys351 is an ATP binding site. Residues 585 to 620 (LAPAKSQQVAQAVETMEKNSSTTPAPAKEGEAGQAS) form a disordered region. In terms of domain architecture, tRNA-binding spans 628-728 (DFGKIDLRVA…EGARPGMKVK (101 aa)).

Belongs to the class-I aminoacyl-tRNA synthetase family. MetG type 1 subfamily. In terms of assembly, homodimer. Requires Zn(2+) as cofactor.

The protein resides in the cytoplasm. It carries out the reaction tRNA(Met) + L-methionine + ATP = L-methionyl-tRNA(Met) + AMP + diphosphate. Functionally, is required not only for elongation of protein synthesis but also for the initiation of all mRNA translation through initiator tRNA(fMet) aminoacylation. The sequence is that of Methionine--tRNA ligase from Nitrosospira multiformis (strain ATCC 25196 / NCIMB 11849 / C 71).